The chain runs to 475 residues: Putative histidine permease (475 aa).

The next 12 helical transmembrane spans lie at 20-40, 44-64, 87-107, 127-147, 162-182, 199-219, 246-266, 277-297, 341-361, 363-383, 410-430, and 434-454; these read LFMI…TGYT, AGPG…YLVM, FIGP…WVVT, SVWM…AFSV, IVTI…LISL, GLFP…SFAF, VAWR…GLIS, FVAV…NFVI, ALMI…VAPG, VYVV…MSIA, YPLM…GLAF, and QRIA…IYHF.

This sequence belongs to the amino acid-polyamine-organocation (APC) superfamily.

Its subcellular location is the cell membrane. The protein is Putative histidine permease (hutM) of Bacillus subtilis (strain 168).